The following is a 113-amino-acid chain: Single-stranded DNA-binding protein B (113 aa).

The 104-residue stretch at 1-104 (MFNQVMLVGR…VLADTVRFMD (104 aa)) folds into the SSB domain. Phosphotyrosine is present on Tyr82.

In terms of assembly, homotetramer. Post-translationally, phosphorylated by YwqD, which increases ssDNA affinity; dephosphorylated by YwqE.

It localises to the cytoplasm. In terms of biological role, not essential for replication of the chromosome, but is required for optimal competence. Binds ssDNA, binding is facilitated by DprA, acts as an accessory factor for homologous DNA strand exchange. The sequence is that of Single-stranded DNA-binding protein B (ssbB) from Bacillus subtilis (strain 168).